Reading from the N-terminus, the 639-residue chain is 1-deoxy-D-xylulose-5-phosphate synthase (639 aa).

Thiamine diphosphate-binding positions include histidine 79 and glycine 120–serine 122. Residue aspartate 151 coordinates Mg(2+). Thiamine diphosphate-binding positions include glycine 152–serine 153, asparagine 180, tyrosine 289, and glutamate 371. Residue asparagine 180 coordinates Mg(2+).

The protein belongs to the transketolase family. DXPS subfamily. In terms of assembly, homodimer. The cofactor is Mg(2+). Thiamine diphosphate serves as cofactor.

It catalyses the reaction D-glyceraldehyde 3-phosphate + pyruvate + H(+) = 1-deoxy-D-xylulose 5-phosphate + CO2. The protein operates within metabolic intermediate biosynthesis; 1-deoxy-D-xylulose 5-phosphate biosynthesis; 1-deoxy-D-xylulose 5-phosphate from D-glyceraldehyde 3-phosphate and pyruvate: step 1/1. Catalyzes the acyloin condensation reaction between C atoms 2 and 3 of pyruvate and glyceraldehyde 3-phosphate to yield 1-deoxy-D-xylulose-5-phosphate (DXP). The protein is 1-deoxy-D-xylulose-5-phosphate synthase of Agrobacterium fabrum (strain C58 / ATCC 33970) (Agrobacterium tumefaciens (strain C58)).